We begin with the raw amino-acid sequence, 197 residues long: MKQPSLIYLTGFSGSGKSTIGPLLANSLGYDFVDLDQQIEHLAGKTINRIFTEEGEAHFRDLELMVLQNYSGKSELVVSLGGGLLQNDRCFSLIISTGTLVYLHSNPLVLAKRLSHKSDRPLMKGEDGQRLSRDAIEQKILNMLEQREPRYKTAQITVETDTKRIGTTVEELTRKIERYIRRCEKKQLERNTKQRKQ.

14-19 (GSGKST) contributes to the ATP binding site. S18 is a Mg(2+) binding site. D36, R60, and G82 together coordinate substrate. R120 contacts ATP. R147 contacts substrate.

It belongs to the shikimate kinase family. Monomer. Mg(2+) serves as cofactor.

It localises to the cytoplasm. The enzyme catalyses shikimate + ATP = 3-phosphoshikimate + ADP + H(+). Its pathway is metabolic intermediate biosynthesis; chorismate biosynthesis; chorismate from D-erythrose 4-phosphate and phosphoenolpyruvate: step 5/7. In terms of biological role, catalyzes the specific phosphorylation of the 3-hydroxyl group of shikimic acid using ATP as a cosubstrate. This is Shikimate kinase from Prosthecochloris aestuarii (strain DSM 271 / SK 413).